We begin with the raw amino-acid sequence, 143 residues long: Flagellar assembly factor FliW (143 aa).

The protein belongs to the FliW family. In terms of assembly, interacts with translational regulator CsrA and flagellin(s).

It localises to the cytoplasm. In terms of biological role, acts as an anti-CsrA protein, binds CsrA and prevents it from repressing translation of its target genes, one of which is flagellin. Binds to flagellin and participates in the assembly of the flagellum. This chain is Flagellar assembly factor FliW, found in Clostridium botulinum (strain 657 / Type Ba4).